A 176-amino-acid chain; its full sequence is RNA pyrophosphohydrolase (176 aa).

A Nudix hydrolase domain is found at 8 to 159 (PYRTCVGMML…KRPVYERVVK (152 aa)). Positions 47–68 (GGVDPGEDTWAAAKRELYEETS) match the Nudix box motif.

It belongs to the Nudix hydrolase family. RppH subfamily. The cofactor is a divalent metal cation.

Accelerates the degradation of transcripts by removing pyrophosphate from the 5'-end of triphosphorylated RNA, leading to a more labile monophosphorylated state that can stimulate subsequent ribonuclease cleavage. This chain is RNA pyrophosphohydrolase, found in Rhodopseudomonas palustris (strain BisA53).